We begin with the raw amino-acid sequence, 172 residues long: uncharacterized protein (172 aa).

Residues 3–171 (KKVAIILTNE…FNREIVNQLN (169 aa)) form the PfpI endopeptidase domain.

This sequence belongs to the peptidase C56 family.

This is an uncharacterized protein from Staphylococcus saprophyticus subsp. saprophyticus (strain ATCC 15305 / DSM 20229 / NCIMB 8711 / NCTC 7292 / S-41).